A 246-amino-acid polypeptide reads, in one-letter code: UPF0736 protein Aflv_2136 (246 aa).

It belongs to the UPF0736 family.

This Anoxybacillus flavithermus (strain DSM 21510 / WK1) protein is UPF0736 protein Aflv_2136.